We begin with the raw amino-acid sequence, 205 residues long: MKKELILKALKLRDMGFPSGDIAEELNISVKTALYLTLNGEELLKAGETPKEDSEKLDIFLEWDNVRASSRRLRNISKIICDMLSDVEFDGIVGISSGGVPLATLISDELDKNFSIYVPKKHVHTEKEKTTGFIGQNMSSIVGKDVIIVDDVMTSGNSVKETIKYLKGIANPKKVFVVMDKSGIDEIDGVKIEHLFRTGVVDIKK.

This sequence belongs to the purine/pyrimidine phosphoribosyltransferase family. GfcR subfamily.

This Methanococcus maripaludis (strain C5 / ATCC BAA-1333) protein is Transcriptional regulator GfcR.